The chain runs to 1318 residues: Ubiquitin carboxyl-terminal hydrolase 19 (1318 aa).

The disordered stretch occupies residues 1–109; that stretch reads MSGGASATGP…GACEDPHDLL (109 aa). The Cytoplasmic portion of the chain corresponds to 1 to 1291; the sequence is MSGGASATGP…TTPDEGCLRY (1291 aa). Residues 28–44 show a composition bias toward basic and acidic residues; sequence DRANQESKDGDPRKETG. The span at 83–94 shows a compositional bias: polar residues; it reads PSSSGSASTPQE. Residues 95–107 show a composition bias toward basic and acidic residues; it reads EQTKEGACEDPHD. Residues 113–202 enclose the CS 1 domain; sequence TPELLLDWRQ…VPMLTWPSLL (90 aa). Positions 234-255 are disordered; the sequence is KAVPPGNDPVSPAMVRSRNPGK. Ser244 carries the post-translational modification Phosphoserine. The CS 2 domain occupies 282–384; it reads LAFVKNDSYE…RQSQRWGGLE (103 aa). Residues 390–479 are disordered; that stretch reads VGGAKVAVPT…PMPHSPVSGD (90 aa). Composition is skewed to basic and acidic residues over residues 420 to 436 and 447 to 457; these read EEAR…RSED and PMEHVTPKPET. Residues 497 to 1214 form the USP domain; it reads TGLVNLGNTC…YAYVLFYRRR (718 aa). Catalysis depends on Cys506, which acts as the Nucleophile. Positions 791, 794, 808, 811, 817, 821, 829, and 833 each coordinate Zn(2+). The MYND-type zinc finger occupies 791–833; that stretch reads CAACQRKQQSEDEKLKRCTRCYRVGYCNQLCQKTHWPDHKGLC. Catalysis depends on His1165, which acts as the Proton acceptor. Positions 1218-1232 are enriched in basic and acidic residues; sequence VERPPRAGHSEHHPD. Positions 1218 to 1239 are disordered; sequence VERPPRAGHSEHHPDLGPAAEA. Residues 1292–1312 form a helical membrane-spanning segment; sequence FVLGTVAALVALVLNVFYPLV. Topologically, residues 1313 to 1318 are lumenal; sequence SQSRWR.

This sequence belongs to the peptidase C19 family. Interacts with RNF123. Interacts with BIRC2/c-IAP1, BIRC3/c-IAP2 and XIAP/BIRC4. Interacts with HIF1A (via N-terminus). Interacts (via N-terminus) with HSP90AA1; this interaction activates the deubiquitinase activity of USP19.

It localises to the endoplasmic reticulum membrane. It carries out the reaction Thiol-dependent hydrolysis of ester, thioester, amide, peptide and isopeptide bonds formed by the C-terminal Gly of ubiquitin (a 76-residue protein attached to proteins as an intracellular targeting signal).. In terms of biological role, deubiquitinating enzyme that regulates the degradation of various proteins by removing ubiquitin moieties, thereby preventing their proteasomal degradation. Stabilizes RNF123, which promotes CDKN1B degradation and contributes to cell proliferation. Decreases the levels of ubiquitinated proteins during skeletal muscle formation and acts to repress myogenesis. Modulates transcription of major myofibrillar proteins. Also involved in turnover of endoplasmic-reticulum-associated degradation (ERAD) substrates. Mechanistically, deubiquitinates and thereby stabilizes several E3 ligases involved in the ERAD pathway including SYVN1 or MARCHF6. Regulates the stability of other E3 ligases including BIRC2/c-IAP1 and BIRC3/c-IAP2 by preventing their ubiquitination. Required for cells to mount an appropriate response to hypoxia by rescuing HIF1A from degradation in a non-catalytic manner and by mediating the deubiquitination of FUNDC1. Attenuates mitochondrial damage and ferroptosis by targeting and stabilizing NADPH oxidase 4/NOX4. Negatively regulates TNF-alpha- and IL-1beta-triggered NF-kappa-B activation by hydrolyzing 'Lys-27'- and 'Lys-63'-linked polyubiquitin chains from MAP3K7. Modulates also the protein level and aggregation of polyQ-expanded huntingtin/HTT through HSP90AA1. The chain is Ubiquitin carboxyl-terminal hydrolase 19 (USP19) from Homo sapiens (Human).